A 259-amino-acid chain; its full sequence is Acetylglutamate kinase (259 aa).

Residues glycine 46–glycine 47, arginine 68, and asparagine 162 each bind substrate.

This sequence belongs to the acetylglutamate kinase family. ArgB subfamily.

It is found in the cytoplasm. It carries out the reaction N-acetyl-L-glutamate + ATP = N-acetyl-L-glutamyl 5-phosphate + ADP. It functions in the pathway amino-acid biosynthesis; L-arginine biosynthesis; N(2)-acetyl-L-ornithine from L-glutamate: step 2/4. Catalyzes the ATP-dependent phosphorylation of N-acetyl-L-glutamate. The polypeptide is Acetylglutamate kinase (Roseiflexus castenholzii (strain DSM 13941 / HLO8)).